The primary structure comprises 522 residues: Man(5)GlcNAc(2)-PP-dolichol translocation protein RFT1 (522 aa).

A run of 10 helical transmembrane segments spans residues 35 to 55 (DVLGLVNVRLTLLYSSILFLT), 75 to 95 (LLWLSPIISTVISVVCVYLWY), 108 to 128 (VLLSFPISAIIESIAEPFSVI), 143 to 165 (FAIGQGMLICVKRIFVLAGLFMF), 177 to 197 (AQYIGAIAYLLFNFVAFYIYI), 322 to 342 (VVGVIGFVACTFGIPYSPVVI), 354 to 374 (GGALLLSLYSGYILVTAINGI), 400 to 420 (IIHLIINYVLCVYMNSAGFIV), 457 to 477 (TSIFLGVSLLATSFTYLLFAT), and 479 to 499 (PGLSYTLAHIAIGAVCLILTA).

Belongs to the RFT1 family.

It is found in the endoplasmic reticulum membrane. Its pathway is protein modification; protein glycosylation. In terms of biological role, intramembrane glycolipid transporter that operates in the biosynthetic pathway of dolichol-linked oligosaccharides, the glycan precursors employed in protein asparagine (N)-glycosylation. The sequential addition of sugars to dolichol pyrophosphate produces dolichol-linked oligosaccharides containing fourteen sugars, including two GlcNAcs, nine mannoses and three glucoses. Once assembled, the oligosaccharide is transferred from the lipid to nascent proteins by oligosaccharyltransferases. The assembly of dolichol-linked oligosaccharides begins on the cytosolic side of the endoplasmic reticulum membrane and finishes in its lumen. RFT1 could mediate the translocation of the cytosolically oriented intermediate DolPP-GlcNAc2Man5, produced by ALG11, into the ER lumen where dolichol-linked oligosaccharides assembly continues. However, the intramembrane lipid transporter activity could not be confirmed in vitro. The protein is Man(5)GlcNAc(2)-PP-dolichol translocation protein RFT1 of Caenorhabditis elegans.